Here is a 105-residue protein sequence, read N- to C-terminus: Putative regulatory protein COPRO5265_1186 (105 aa).

Positions Arg-76–Val-105 are disordered. The segment covering Glu-78–Val-105 has biased composition (acidic residues).

It belongs to the RemA family.

The polypeptide is Putative regulatory protein COPRO5265_1186 (Coprothermobacter proteolyticus (strain ATCC 35245 / DSM 5265 / OCM 4 / BT)).